The sequence spans 838 residues: Probable bifunctional folylpolyglutamate synthase/dihydropteroate synthase (838 aa).

A folylpolyglutamate synthase region spans residues 1-418; that stretch reads MEYHEAVNFL…LVVGSLYVVA (418 aa). 46-52 provides a ligand contact to ATP; it reads GSNGKGS. Positions 541–561 are disordered; it reads AADAGEDDERGAGDASDAGHD. In terms of domain architecture, Pterin-binding spans 569–819; it reads TAVMGILNVT…DVPENVAAVN (251 aa). The interval 571-838 is DHPS; that stretch reads VMGILNVTPN…RFEADAERED (268 aa). N576 contributes to the Mg(2+) binding site. Residues T616, D649, N668, D738, K774, and 807 to 809 contribute to the (7,8-dihydropterin-6-yl)methyl diphosphate site; that span reads RVH.

This sequence in the N-terminal section; belongs to the folylpolyglutamate synthase family. It in the C-terminal section; belongs to the DHPS family. It depends on Mg(2+) as a cofactor.

It catalyses the reaction (6S)-5,6,7,8-tetrahydrofolyl-(gamma-L-Glu)(n) + L-glutamate + ATP = (6S)-5,6,7,8-tetrahydrofolyl-(gamma-L-Glu)(n+1) + ADP + phosphate + H(+). It carries out the reaction (7,8-dihydropterin-6-yl)methyl diphosphate + 4-aminobenzoate = 7,8-dihydropteroate + diphosphate. Its pathway is cofactor biosynthesis; tetrahydrofolylpolyglutamate biosynthesis. It functions in the pathway cofactor biosynthesis; tetrahydrofolate biosynthesis; 7,8-dihydrofolate from 2-amino-4-hydroxy-6-hydroxymethyl-7,8-dihydropteridine diphosphate and 4-aminobenzoate: step 1/2. Its function is as follows. Can complement an H.volcanii mutant strain that is thymidine auxotroph because it lacks the two dihydrofolate reductase genes encoded by hdrA and hdrB. This is Probable bifunctional folylpolyglutamate synthase/dihydropteroate synthase (folCP) from Haloferax volcanii (strain ATCC 29605 / DSM 3757 / JCM 8879 / NBRC 14742 / NCIMB 2012 / VKM B-1768 / DS2) (Halobacterium volcanii).